We begin with the raw amino-acid sequence, 373 residues long: 3-dehydroquinate synthase (373 aa).

NAD(+) is bound by residues Gly-120–Asp-124, Thr-144–Thr-145, Lys-157, Lys-166, and Phe-184–Thr-187. Positions 199, 262, and 278 each coordinate Zn(2+).

It belongs to the sugar phosphate cyclases superfamily. Dehydroquinate synthase family. NAD(+) serves as cofactor. It depends on Co(2+) as a cofactor. Requires Zn(2+) as cofactor.

Its subcellular location is the cytoplasm. It carries out the reaction 7-phospho-2-dehydro-3-deoxy-D-arabino-heptonate = 3-dehydroquinate + phosphate. The protein operates within metabolic intermediate biosynthesis; chorismate biosynthesis; chorismate from D-erythrose 4-phosphate and phosphoenolpyruvate: step 2/7. Its function is as follows. Catalyzes the conversion of 3-deoxy-D-arabino-heptulosonate 7-phosphate (DAHP) to dehydroquinate (DHQ). This chain is 3-dehydroquinate synthase, found in Clostridium tetani (strain Massachusetts / E88).